The sequence spans 274 residues: Cytochrome b-c1 complex subunit Rieske, mitochondrial (274 aa).

At 79–103 the chain is on the mitochondrial matrix side; it reads SHTDVKVPDFCDYRRPEVLDSTKSS. The helical transmembrane segment at 104 to 140 threads the bilayer; sequence RESSEARKSFSYMVTAVTTVGVAYAAKNAVTQFVSSM. The Mitochondrial intermembrane portion of the chain corresponds to 141–274; that stretch reads SASADVLAMA…FTSDDMVVVG (134 aa). In terms of domain architecture, Rieske spans 187–272; that stretch reads EAAVELSQLR…YEFTSDDMVV (86 aa). 5 residues coordinate [2Fe-2S] cluster: C217, H219, C236, H239, and S241. The cysteines at positions 222 and 238 are disulfide-linked.

This sequence belongs to the Rieske iron-sulfur protein family. Component of the ubiquinol-cytochrome c oxidoreductase (cytochrome b-c1 complex, complex III, CIII), a multisubunit enzyme composed of 11 subunits. The complex is composed of 3 respiratory subunits cytochrome b, cytochrome c1 and Rieske protein UQCRFS1, 2 core protein subunits UQCRC1/QCR1 and UQCRC2/QCR2, and 6 low-molecular weight protein subunits UQCRH/QCR6, UQCRB/QCR7, UQCRQ/QCR8, UQCR10/QCR9, UQCR11/QCR10 and subunit 9, the cleavage product of Rieske protein UQCRFS1. The complex exists as an obligatory dimer and forms supercomplexes (SCs) in the inner mitochondrial membrane with NADH-ubiquinone oxidoreductase (complex I, CI) and cytochrome c oxidase (complex IV, CIV), resulting in different assemblies (supercomplex SCI(1)III(2)IV(1) and megacomplex MCI(2)III(2)IV(2)). Incorporation of the Rieske protein UQCRFS1 is the penultimate step in complex III assembly. Interacts with TTC19, which is involved in the clearance of UQCRFS1 fragments. As to quaternary structure, component of the ubiquinol-cytochrome c oxidoreductase (cytochrome b-c1 complex, complex III, CIII). Subunit 9 corresponds to the mitochondrial targeting sequence (MTS) of Rieske protein UQCRFS1. It is retained after processing and incorporated inside complex III, where it remains bound to the complex and localizes between the 2 core subunits UQCRC1/QCR1 and UQCRC2/QCR2. Requires [2Fe-2S] cluster as cofactor. Post-translationally, proteolytic processing is necessary for the correct insertion of UQCRFS1 in the complex III dimer. Several fragments are generated during UQCRFS1 insertion, most probably due to the endogenous matrix-processing peptidase (MPP) activity of the 2 core protein subunits UQCRC1/QCR1 and UQCRC2/QCR2, which are homologous to the 2 mitochondrial-processing peptidase (MPP) subunits beta-MPP and alpha-MPP respectively. The action of the protease is also necessary for the clearance of the UQCRFS1 fragments.

The protein localises to the mitochondrion inner membrane. The enzyme catalyses a quinol + 2 Fe(III)-[cytochrome c](out) = a quinone + 2 Fe(II)-[cytochrome c](out) + 2 H(+)(out). Functionally, component of the ubiquinol-cytochrome c oxidoreductase, a multisubunit transmembrane complex that is part of the mitochondrial electron transport chain which drives oxidative phosphorylation. The respiratory chain contains 3 multisubunit complexes succinate dehydrogenase (complex II, CII), ubiquinol-cytochrome c oxidoreductase (cytochrome b-c1 complex, complex III, CIII) and cytochrome c oxidase (complex IV, CIV), that cooperate to transfer electrons derived from NADH and succinate to molecular oxygen, creating an electrochemical gradient over the inner membrane that drives transmembrane transport and the ATP synthase. The cytochrome b-c1 complex catalyzes electron transfer from ubiquinol to cytochrome c, linking this redox reaction to translocation of protons across the mitochondrial inner membrane, with protons being carried across the membrane as hydrogens on the quinol. In the process called Q cycle, 2 protons are consumed from the matrix, 4 protons are released into the intermembrane space and 2 electrons are passed to cytochrome c. The Rieske protein is a catalytic core subunit containing a [2Fe-2S] iron-sulfur cluster. It cycles between 2 conformational states during catalysis to transfer electrons from the quinol bound in the Q(0) site in cytochrome b to cytochrome c1. Incorporation of UQCRFS1 is the penultimate step in complex III assembly. Component of the ubiquinol-cytochrome c oxidoreductase (cytochrome b-c1 complex, complex III, CIII). UQCRFS1 undergoes proteolytic processing once it is incorporated in the complex III dimer. One of the fragments, called subunit 9, corresponds to its mitochondrial targeting sequence (MTS). The proteolytic processing is necessary for the correct insertion of UQCRFS1 in the complex III dimer, but the persistence of UQCRFS1-derived fragments may prevent newly imported UQCRFS1 to be processed and assembled into complex III and is detrimental for the complex III structure and function. The protein is Cytochrome b-c1 complex subunit Rieske, mitochondrial (UQCRFS1) of Colobus polykomos (Western black-and-white colobus monkey).